The chain runs to 308 residues: Acetyl-coenzyme A carboxylase carboxyl transferase subunit beta (308 aa).

One can recognise a CoA carboxyltransferase N-terminal domain in the interval 25 to 294; that stretch reads VWTKCTSCEQ…PLVVSVNDAP (270 aa). 4 residues coordinate Zn(2+): Cys-29, Cys-32, Cys-48, and Cys-51. The segment at 29–51 adopts a C4-type zinc-finger fold; the sequence is CTSCEQVLYYAELERNLEVCPKC.

The protein belongs to the AccD/PCCB family. As to quaternary structure, acetyl-CoA carboxylase is a heterohexamer composed of biotin carboxyl carrier protein (AccB), biotin carboxylase (AccC) and two subunits each of ACCase subunit alpha (AccA) and ACCase subunit beta (AccD). Requires Zn(2+) as cofactor.

It is found in the cytoplasm. The catalysed reaction is N(6)-carboxybiotinyl-L-lysyl-[protein] + acetyl-CoA = N(6)-biotinyl-L-lysyl-[protein] + malonyl-CoA. It participates in lipid metabolism; malonyl-CoA biosynthesis; malonyl-CoA from acetyl-CoA: step 1/1. Functionally, component of the acetyl coenzyme A carboxylase (ACC) complex. Biotin carboxylase (BC) catalyzes the carboxylation of biotin on its carrier protein (BCCP) and then the CO(2) group is transferred by the transcarboxylase to acetyl-CoA to form malonyl-CoA. In Vibrio cholerae serotype O1 (strain ATCC 39315 / El Tor Inaba N16961), this protein is Acetyl-coenzyme A carboxylase carboxyl transferase subunit beta.